We begin with the raw amino-acid sequence, 220 residues long: uncharacterized protein (220 aa).

A disordered region spans residues 194-220 (DQSQQQATKSNSKTKKLKGNHGEKTKI). Residues 195–204 (QSQQQATKSN) show a composition bias toward polar residues.

This is an uncharacterized protein from Borreliella burgdorferi (strain ATCC 35210 / DSM 4680 / CIP 102532 / B31) (Borrelia burgdorferi).